The primary structure comprises 301 residues: uncharacterized protein (301 aa).

Active-site charge relay system residues include S44 and Y107. The active-site Proton donor is Y133. K162 acts as the Schiff-base intermediate with substrate in catalysis.

It belongs to the DapA family. Homotetramer.

The protein resides in the cytoplasm. This is an uncharacterized protein from Pyrobaculum islandicum (strain DSM 4184 / JCM 9189 / GEO3).